Consider the following 621-residue polypeptide: DNA mismatch repair protein MutL (621 aa).

The protein belongs to the DNA mismatch repair MutL/HexB family.

In terms of biological role, this protein is involved in the repair of mismatches in DNA. It is required for dam-dependent methyl-directed DNA mismatch repair. May act as a 'molecular matchmaker', a protein that promotes the formation of a stable complex between two or more DNA-binding proteins in an ATP-dependent manner without itself being part of a final effector complex. The chain is DNA mismatch repair protein MutL from Petrotoga mobilis (strain DSM 10674 / SJ95).